Consider the following 123-residue polypeptide: Small ribosomal subunit protein uS12 (123 aa).

The residue at position 89 (Asp-89) is a 3-methylthioaspartic acid. The interval 101 to 123 is disordered; it reads TLDTQGVKDRRQRRSKYGAKRPK. The span at 110 to 123 shows a compositional bias: basic residues; that stretch reads RRQRRSKYGAKRPK.

Belongs to the universal ribosomal protein uS12 family. As to quaternary structure, part of the 30S ribosomal subunit. Contacts proteins S8 and S17. May interact with IF1 in the 30S initiation complex.

In terms of biological role, with S4 and S5 plays an important role in translational accuracy. Functionally, interacts with and stabilizes bases of the 16S rRNA that are involved in tRNA selection in the A site and with the mRNA backbone. Located at the interface of the 30S and 50S subunits, it traverses the body of the 30S subunit contacting proteins on the other side and probably holding the rRNA structure together. The combined cluster of proteins S8, S12 and S17 appears to hold together the shoulder and platform of the 30S subunit. The sequence is that of Small ribosomal subunit protein uS12 from Paramagnetospirillum magneticum (strain ATCC 700264 / AMB-1) (Magnetospirillum magneticum).